We begin with the raw amino-acid sequence, 531 residues long: Light-independent protochlorophyllide reductase subunit B (531 aa).

Residue Asp-36 participates in [4Fe-4S] cluster binding. The active-site Proton donor is the Asp-296. 431 to 432 (GM) serves as a coordination point for substrate.

It belongs to the ChlB/BchB/BchZ family. In terms of assembly, protochlorophyllide reductase is composed of three subunits; ChlL, ChlN and ChlB. Forms a heterotetramer of two ChlB and two ChlN subunits. [4Fe-4S] cluster serves as cofactor.

It localises to the plastid. Its subcellular location is the chloroplast. It carries out the reaction chlorophyllide a + oxidized 2[4Fe-4S]-[ferredoxin] + 2 ADP + 2 phosphate = protochlorophyllide a + reduced 2[4Fe-4S]-[ferredoxin] + 2 ATP + 2 H2O. The protein operates within porphyrin-containing compound metabolism; chlorophyll biosynthesis (light-independent). Component of the dark-operative protochlorophyllide reductase (DPOR) that uses Mg-ATP and reduced ferredoxin to reduce ring D of protochlorophyllide (Pchlide) to form chlorophyllide a (Chlide). This reaction is light-independent. The NB-protein (ChlN-ChlB) is the catalytic component of the complex. This is Light-independent protochlorophyllide reductase subunit B from Nephroselmis olivacea (Green alga).